A 367-amino-acid chain; its full sequence is mRNA-decapping enzyme-like protein (367 aa).

Disordered regions lie at residues 144-179 (PKASSSKSEFEELEAKPTMAVMDGPLEPSSTARDAP), 196-246 (NTAS…SSSP), and 299-333 (PNNASHQQRSYGTPVLQPFPPPTPPPSLAPAPTGP). Polar residues predominate over residues 196–211 (NTASGSASGPYQSSAI). Residues 212-234 (PHQPHQPHQPTIAPPVAAAAPPQ) are compositionally biased toward low complexity. The span at 299-309 (PNNASHQQRSY) shows a compositional bias: polar residues. Residues 315–331 (QPFPPPTPPPSLAPAPT) show a composition bias toward pro residues.

Belongs to the DCP1 family. Homodimer. Component of the decapping complex. Interacts with DCP2 and DCP5. Interacts with BCHA1. Expressed in seedlings, mostly in root tips, root hairs, and the vascular system. Also present in roots, leaves, stems, and flowers.

It localises to the cytoplasm. The protein localises to the P-body. In terms of biological role, as a component of the decapping complex, involved in the degradation of mRNAs. Essential for postembryonic development. In Arabidopsis thaliana (Mouse-ear cress), this protein is mRNA-decapping enzyme-like protein.